The sequence spans 444 residues: 23S rRNA (uracil(1939)-C(5))-methyltransferase RlmD (444 aa).

Positions 5 to 64 (KPKLNLTSQTARIVNLSHDGRGIARVNGKATFIQGALPGEVVEFQYTRVKKDFDEGKLLS) constitute a TRAM domain. [4Fe-4S] cluster-binding residues include C77, C83, C86, and C166. Residues Q276, F305, N310, E326, N353, and D374 each coordinate S-adenosyl-L-methionine. C400 functions as the Nucleophile in the catalytic mechanism.

Belongs to the class I-like SAM-binding methyltransferase superfamily. RNA M5U methyltransferase family. RlmD subfamily.

The enzyme catalyses uridine(1939) in 23S rRNA + S-adenosyl-L-methionine = 5-methyluridine(1939) in 23S rRNA + S-adenosyl-L-homocysteine + H(+). Catalyzes the formation of 5-methyl-uridine at position 1939 (m5U1939) in 23S rRNA. The sequence is that of 23S rRNA (uracil(1939)-C(5))-methyltransferase RlmD from Legionella pneumophila (strain Paris).